A 397-amino-acid chain; its full sequence is 3-hydroxybenzoate 6-hydroxylase (397 aa).

Belongs to the 3-hydroxybenzoate 6-hydroxylase family. In terms of assembly, monomer. It depends on FAD as a cofactor.

It carries out the reaction 3-hydroxybenzoate + NADH + O2 + H(+) = 2,5-dihydroxybenzoate + NAD(+) + H2O. With respect to regulation, inhibited by copper, mercury and iron ions. Catalyzes the NAD- or NADP-dependent conversion of 3-hydroxybenzoate to gentisate. NAD and NADP function equally well. This is 3-hydroxybenzoate 6-hydroxylase (mhbM) from Klebsiella oxytoca.